Here is a 655-residue protein sequence, read N- to C-terminus: Proprotein convertase subtilisin/kexin type 4 (655 aa).

A signal peptide spans 1–26; sequence MRPSQTELWLGLTLTLALLAVRWASA. Residues 27–110 constitute a propeptide that is removed on maturation; it reads QAPIYVSSWA…QQTLRRRVKR (84 aa). Residues 123–437 enclose the Peptidase S8 domain; the sequence is QWYMNKEIQQ…YGLLDAGLLV (315 aa). Catalysis depends on charge relay system residues Asp155, His196, and Ser370. One can recognise a P/Homo B domain in the interval 446 to 580; sequence TKPQKKCAIR…TLLLYGTAED (135 aa). N-linked (GlcNAc...) asparagine glycosylation is present at Asn472.

The protein belongs to the peptidase S8 family. Furin subfamily. In terms of assembly, the proPCSK4 form interacts with HSPA5; the interaction takes place at the endoplasmic reticulum. N-glycosylated. Post-translationally, synthesized in the endoplasmic reticulum as a zymogen, is matured by autocatalytic cleavage between the prodomain and the catalytic domain. As to expression, expressed abundantly in the testis since postnatal Day 16. In testis, strongly detected in round and elongated spermatids as well as spermatocytes. Also observed in residual bodies engulfed by Sertoli cells at spermatogenic stages VIII and IX. In ovaries, expressed in macrophage-like cells of the ovarian theca, interstitium and corpora lutea.

It localises to the cytoplasmic vesicle. It is found in the secretory vesicle. The protein localises to the acrosome membrane. Proprotein convertase involved in the processing of hormone and other protein precursors at sites comprised of pairs of basic amino acid residues. In males, important for ADAM2 processing as well as other acrosomal proteins with roles in fertilization and critical for normal fertilization events such as sperm capacitation, acrosome reaction and binding of sperm to zona pellucida. Also plays a role in female fertility, involved in the regulation of trophoblast migration and placental development, may be through the proteolytical processing and activation of proteins such as IGF2. May also participate in folliculogenesis in the ovaries. This is Proprotein convertase subtilisin/kexin type 4 (Pcsk4) from Mus musculus (Mouse).